Here is a 335-residue protein sequence, read N- to C-terminus: Biotin synthase (335 aa).

The 230-residue stretch at 47 to 276 (FYGKKVKLNM…SKEIRISGGR (230 aa)) folds into the Radical SAM core domain. Cys65, Cys69, and Cys72 together coordinate [4Fe-4S] cluster. [2Fe-2S] cluster is bound by residues Cys109, Cys141, Cys201, and Arg271.

The protein belongs to the radical SAM superfamily. Biotin synthase family. Homodimer. [4Fe-4S] cluster serves as cofactor. It depends on [2Fe-2S] cluster as a cofactor.

The catalysed reaction is (4R,5S)-dethiobiotin + (sulfur carrier)-SH + 2 reduced [2Fe-2S]-[ferredoxin] + 2 S-adenosyl-L-methionine = (sulfur carrier)-H + biotin + 2 5'-deoxyadenosine + 2 L-methionine + 2 oxidized [2Fe-2S]-[ferredoxin]. The protein operates within cofactor biosynthesis; biotin biosynthesis; biotin from 7,8-diaminononanoate: step 2/2. Functionally, catalyzes the conversion of dethiobiotin (DTB) to biotin by the insertion of a sulfur atom into dethiobiotin via a radical-based mechanism. The polypeptide is Biotin synthase (Bacillus subtilis (strain 168)).